Consider the following 171-residue polypeptide: Peptide deformylase (171 aa).

Fe cation contacts are provided by C94 and H136. The active site involves E137. Position 140 (H140) interacts with Fe cation.

The protein belongs to the polypeptide deformylase family. Fe(2+) is required as a cofactor.

It catalyses the reaction N-terminal N-formyl-L-methionyl-[peptide] + H2O = N-terminal L-methionyl-[peptide] + formate. In terms of biological role, removes the formyl group from the N-terminal Met of newly synthesized proteins. Requires at least a dipeptide for an efficient rate of reaction. N-terminal L-methionine is a prerequisite for activity but the enzyme has broad specificity at other positions. The chain is Peptide deformylase from Afipia carboxidovorans (strain ATCC 49405 / DSM 1227 / KCTC 32145 / OM5) (Oligotropha carboxidovorans).